The sequence spans 145 residues: RNA polymerase I-specific transcription initiation factor RRN10 (145 aa).

Component of the UAF (upstream activation factor) complex which consists of UAF30, RRN5, RRN9, RRN10, and histones H3 and H4.

Its subcellular location is the nucleus. It is found in the nucleolus. Functionally, component of the UAF (upstream activation factor) complex which interacts with the upstream element of the RNA polymerase I promoter and forms a stable preinitiation complex. Together with SPT15/TBP UAF seems to stimulate basal transcription to a fully activated level. This is RNA polymerase I-specific transcription initiation factor RRN10 (RRN10) from Saccharomyces cerevisiae (strain ATCC 204508 / S288c) (Baker's yeast).